The following is a 247-amino-acid chain: UPF0246 protein LAF_1150 (247 aa).

This sequence belongs to the UPF0246 family.

The sequence is that of UPF0246 protein LAF_1150 from Limosilactobacillus fermentum (strain NBRC 3956 / LMG 18251) (Lactobacillus fermentum).